A 1099-amino-acid chain; its full sequence is Protein DDB_G0287365 (1099 aa).

An N-terminal signal peptide occupies residues 1 to 24 (MMSFNLILILIIFLILIQNYVIDG). Residues 47–174 (KSWKKLKLPI…TKTTWTKLIS (128 aa)) enclose the G8 domain. N-linked (GlcNAc...) asparagine glycosylation is found at asparagine 62, asparagine 137, asparagine 664, asparagine 764, and asparagine 858.

The protein belongs to the CEMIP family.

In Dictyostelium discoideum (Social amoeba), this protein is Protein DDB_G0287365.